The chain runs to 420 residues: Protein MucB (420 aa).

In terms of domain architecture, UmuC spans 2 to 187 (FALIDVNGMY…LPVAEVWGVG (186 aa)).

The protein belongs to the DNA polymerase type-Y family.

In terms of biological role, involved in UV protection and mutation. This Escherichia coli protein is Protein MucB (mucB).